A 466-amino-acid chain; its full sequence is Teichoic acids export ATP-binding protein TagH (466 aa).

The 223-residue stretch at 27–249 (NKAKSLIGSN…YEKFVQWFKK (223 aa)) folds into the ABC transporter domain. 63–70 (GLNGAGKS) contributes to the ATP binding site. The tract at residues 250 to 466 (LPKKEQEKFK…TTEQSDGANQ (217 aa)) is unknown. Disordered stretches follow at residues 356–403 (NMTS…SNQN) and 439–466 (IHPGQEINLPEPTTSANSTTEQSDGANQ). A compositionally biased stretch (basic residues) spans 373–384 (PKKKVSQAKKTT). The span at 385 to 403 (KVSSTQKNTSSSSSTSNQN) shows a compositional bias: low complexity. Residues 403 to 447 (NTYIVQAGDSLSIIAENHGYSVEEIQQVNPGVDFSVIHPGQEINL) form the LysM domain. Residues 449–466 (EPTTSANSTTEQSDGANQ) are compositionally biased toward polar residues.

This sequence belongs to the ABC transporter superfamily. Teichoic acids exporter (TC 3.A.1.104.1) family. In terms of assembly, the complex is composed of two ATP-binding proteins (TagH) and two transmembrane proteins (TagG).

It is found in the cell membrane. The catalysed reaction is ATP + H2O + teichoic acidSide 1 = ADP + phosphate + teichoic acidSide 2.. Part of the ABC transporter complex TagGH involved in teichoic acids export. Responsible for energy coupling to the transport system. In Lactococcus lactis subsp. lactis (strain IL1403) (Streptococcus lactis), this protein is Teichoic acids export ATP-binding protein TagH.